Reading from the N-terminus, the 203-residue chain is Small ribosomal subunit protein uS5 (203 aa).

A compositionally biased stretch (basic and acidic residues) spans 1–18 (MENNVKKETIVDSEKVEK). The interval 1–36 (MENNVKKETIVDSEKVEKQQPVTAPVVNKKENTQPK) is disordered. Positions 49-112 (FEERVVKIKR…KNANNNLIKV (64 aa)) constitute an S5 DRBM domain.

The protein belongs to the universal ribosomal protein uS5 family. Part of the 30S ribosomal subunit. Contacts proteins S4 and S8.

Its function is as follows. With S4 and S12 plays an important role in translational accuracy. In terms of biological role, located at the back of the 30S subunit body where it stabilizes the conformation of the head with respect to the body. In Ureaplasma urealyticum serovar 10 (strain ATCC 33699 / Western), this protein is Small ribosomal subunit protein uS5.